A 247-amino-acid chain; its full sequence is Aliphatic sulfonates import ATP-binding protein SsuB 2 (247 aa).

Residues 28-242 form the ABC transporter domain; that stretch reads VSVRGLQRRY…ALRPILLEEL (215 aa). Position 60–67 (60–67) interacts with ATP; that stretch reads GESGCGKT.

Belongs to the ABC transporter superfamily. Aliphatic sulfonates importer (TC 3.A.1.17.2) family. In terms of assembly, the complex is composed of two ATP-binding proteins (SsuB), two transmembrane proteins (SsuC) and a solute-binding protein (SsuA).

Its subcellular location is the cell inner membrane. The enzyme catalyses ATP + H2O + aliphatic sulfonate-[sulfonate-binding protein]Side 1 = ADP + phosphate + aliphatic sulfonateSide 2 + [sulfonate-binding protein]Side 1.. Functionally, part of the ABC transporter complex SsuABC involved in aliphatic sulfonates import. Responsible for energy coupling to the transport system. The polypeptide is Aliphatic sulfonates import ATP-binding protein SsuB 2 (Paraburkholderia xenovorans (strain LB400)).